We begin with the raw amino-acid sequence, 101 residues long: Small ribosomal subunit protein uS14 (101 aa).

It belongs to the universal ribosomal protein uS14 family. Part of the 30S ribosomal subunit. Contacts proteins S3 and S10.

Binds 16S rRNA, required for the assembly of 30S particles and may also be responsible for determining the conformation of the 16S rRNA at the A site. The protein is Small ribosomal subunit protein uS14 of Zymomonas mobilis subsp. mobilis (strain ATCC 31821 / ZM4 / CP4).